The chain runs to 182 residues: Peptidyl-prolyl cis-trans isomerase H (182 aa).

One can recognise a PPIase cyclophilin-type domain in the interval 15–181 (FFDITIGGEP…LDVVISQCGE (167 aa)).

This sequence belongs to the cyclophilin-type PPIase family. PPIase H subfamily.

The protein resides in the nucleus. The enzyme catalyses [protein]-peptidylproline (omega=180) = [protein]-peptidylproline (omega=0). Its function is as follows. PPIases accelerate the folding of proteins. It catalyzes the cis-trans isomerization of proline imidic peptide bonds in oligopeptides. This chain is Peptidyl-prolyl cis-trans isomerase H (CYP3), found in Gibberella zeae (strain ATCC MYA-4620 / CBS 123657 / FGSC 9075 / NRRL 31084 / PH-1) (Wheat head blight fungus).